The chain runs to 212 residues: MSSPATAAAAAASCGVLRHHHPPASPRPPPTTTTTTSRLLLASRSRGLQRPLRVNHAPPRRLPPTAARAQSAAAAGYQPESEFYKVEAILRPWRVPYVSSGLLQMGIRGVTVSDVRGFGAQGGSTERHEGSEFAEDTFIDKVKMEIVVSKDQVEAVVDKIIEKARTGEIGDGKIFLIPVSDVIRIRTGERGERAERMAGGLADKLSSAMPIS.

Composition is skewed to low complexity over residues 1-12, 32-46, and 63-74; these read MSSPATAAAAAA, TTTT…SRSR, and PPTAARAQSAAA. The transit peptide at 1–68 directs the protein to the chloroplast; it reads MSSPATAAAA…PRRLPPTAAR (68 aa). The disordered stretch occupies residues 1–74; it reads MSSPATAAAA…TAARAQSAAA (74 aa). Residues 117 to 121 and 170 to 173 contribute to the ATP site; these read GFGAQ and GDGK. Glycine 119 is a binding site for Mg(2+).

It belongs to the P(II) protein family. In terms of assembly, homodimer.

The protein localises to the plastid. Its subcellular location is the chloroplast. In terms of biological role, participates in sensing carbon and organic nitrogen status and regulates some steps of primary carbon and nitrogen metabolism. The polypeptide is Nitrogen regulatory protein P-II homolog (GLB) (Oryza sativa subsp. japonica (Rice)).